The primary structure comprises 557 residues: Transcription factor fil1 (557 aa).

A disordered region spans residues 234 to 258 (SPVKRELNDSTSPSKLSESSSSLTG). Over residues 243–258 (STSPSKLSESSSSLTG) the composition is skewed to low complexity. 2 consecutive GATA-type zinc fingers follow at residues 365 to 390 (CFNC…CNAC) and 419 to 443 (CANC…CNAC).

Its subcellular location is the nucleus. It localises to the cytoplasm. Its function is as follows. Activates genes required for amino acid biosynthesis and acts as a master transcriptional regulator during amino acid starvation. Binds variations of the DNA sequence 5'-GAT[AC]GC-3'. The polypeptide is Transcription factor fil1 (Schizosaccharomyces pombe (strain 972 / ATCC 24843) (Fission yeast)).